A 42-amino-acid chain; its full sequence is Histone H1B (42 aa).

The 42-residue stretch at 1-42 (TYYELIKAAILALKERNGSSAQAIKKYILENNKIEFQQTFLR) folds into the H15 domain.

Belongs to the histone H1/H5 family.

It localises to the nucleus. Its subcellular location is the chromosome. Its function is as follows. Histones H1 are necessary for the condensation of nucleosome chains into higher-order structures. This chain is Histone H1B, found in Olisthodiscus luteus (Marine phytoflagellate).